Here is a 551-residue protein sequence, read N- to C-terminus: Cytochrome P450 monooxygenase FCK2 (551 aa).

The next 3 helical transmembrane spans lie at 8-28, 35-55, and 69-89; these read FDPA…VFIF, LHVF…VYIV, and VTTI…ISIL. N258 carries N-linked (GlcNAc...) asparagine glycosylation. C493 provides a ligand contact to heme.

Belongs to the cytochrome P450 family. Requires heme as cofactor.

It is found in the membrane. It functions in the pathway secondary metabolite biosynthesis. Its function is as follows. Cytochrome P450 monooxygenase; part of the gene cluster that mediates the biosynthesis of cytokinins such as fusatin, fusatinic acids or 8-oxofusatin, known for their growth promoting and anti-senescence activities toward host plants. FCK1 is a bifunctional enzyme that performs the first steps in the biosynthesis of Fusarium cytokinins. It first condenses adenosine monophosphate (AMP) with dimethylallyl diphosphate (DMAPP) to yield isoprenyl adenosine monophosphate. It then catalyzes the removal of the phosphoribose to produce isopentenylaldehyde. The cytochrome P450 monooxygenase then converts isopentenylaldehyde to trans-zeatin. A condensation step converts trans-zeatin to fusatin which is further modified to produce fusatinic acid. The mechanism for oxidation of fusatin to fusatinic acid remains unknown. 8-oxofusatin could be produced through several pathways, via direct oxygenation of fusatin, or via the 8-oxo-pentenyladenine intermediate which itself must arise from either the prenylation of 8-oxo-AMP by FCK1 and/or oxygenation of isopentenylaldehyde. Both the FCK3 and FCK4 enzymes act downstream of the identified cytokinins to produce yet unidentified compounds. The chain is Cytochrome P450 monooxygenase FCK2 from Fusarium pseudograminearum (strain CS3096) (Wheat and barley crown-rot fungus).